Reading from the N-terminus, the 291-residue chain is uncharacterized protein (291 aa).

The region spanning 5–196 (GVFSGGGVKG…LSNFPIWLFS (192 aa)) is the PNPLA domain. The GXGXXG signature appears at 9–14 (GGGVKG). The chain crosses the membrane as a helical span at residues 34 to 50 (VAGTSAGAIIAAFIASG). The GXSXG signature appears at 36 to 40 (GTSAG). S38 functions as the Nucleophile in the catalytic mechanism. The active-site Proton acceptor is the D183. The DGA/G signature appears at 183–185 (DGG).

It is found in the cell membrane. Probable lipid hydrolase. This is an uncharacterized protein from Bacillus subtilis (strain 168).